Here is a 238-residue protein sequence, read N- to C-terminus: MGRKWANIVAKKTAKDGANSKVYAKFGVEIYVAAKKGDPDPESNSALKFVIDRAKQAQVPKHIIDKAIDKAKGNTDETFTEGRYEGFGPNGSMLIVDTLTSNVNRTAANVRAAFGKNGGNMGASGSVSYLFDNKGVIVFGGEDADAVFEQLLEADVDVDDVEAQEGTITVYTAPTDLHKAIVALRESGIEEFQVTELEMIPQSEVELSGEDLETFEKLYSVLEDDEDVQKIYTNVDGF.

The protein belongs to the TACO1 family. YeeN subfamily.

It localises to the cytoplasm. The sequence is that of Probable transcriptional regulatory protein SPD_1725 from Streptococcus pneumoniae serotype 2 (strain D39 / NCTC 7466).